We begin with the raw amino-acid sequence, 255 residues long: RNA polymerase sigma-F factor (255 aa).

Positions 61 to 74 (DLFQIGCIGLLKSV) match the Polymerase core binding motif. The segment at residues 221 to 240 (QSEVAERLGISQVQVSRLEK) is a DNA-binding region (H-T-H motif).

It belongs to the sigma-70 factor family. In terms of assembly, interacts transiently with the RNAP core.

Interaction with SpoIIAB inhibits sigma-F activity throughout the cell before the formation of the asymmetric septum; after septation the interaction is confined to the mother cell, and sigma-F activity is released in the prespore. Fin, a second, forespore-specific anti-sigma factor is induced in 2 successive waves by sigma-F and sigma-G, by antagonizing sigma-F it allows the switch to sigma-G factor and progression to the late sporulation development stages. Functionally, sigma factors are initiation factors that promote the attachment of RNA polymerase to specific initiation sites and are then released. This sigma factor is responsible for the expression of sporulation specific genes. Interaction with SpoIIAB inhibits sigma-F activity throughout the cell before the formation of the asymmetric septum; after septation the interaction is confined to the mother cell, and sigma F activity is released in the prespore. Responsible for expression of csfB (the anti-sigma-G factor Gin). Associates with the RNAP core only in stationary phase cells. The polypeptide is RNA polymerase sigma-F factor (sigF) (Bacillus subtilis (strain 168)).